Reading from the N-terminus, the 131-residue chain is Profilin-1 (131 aa).

A disulfide bridge links cysteine 13 with cysteine 115. The Involved in PIP2 interaction signature appears at 81–97 (RVIRGKKGAGGITIKKT). Phosphothreonine is present on threonine 111.

This sequence belongs to the profilin family. In terms of assembly, occurs in many kinds of cells as a complex with monomeric actin in a 1:1 ratio.

The protein resides in the cytoplasm. Its subcellular location is the cytoskeleton. Binds to actin and affects the structure of the cytoskeleton. At high concentrations, profilin prevents the polymerization of actin, whereas it enhances it at low concentrations. By binding to PIP2, it inhibits the formation of IP3 and DG. The polypeptide is Profilin-1 (PRO1) (Phleum pratense (Common timothy)).